Here is a 472-residue protein sequence, read N- to C-terminus: Cysteine--tRNA ligase (472 aa).

C29 contributes to the Zn(2+) binding site. Positions 31-41 match the 'HIGH' region motif; that stretch reads PTVYDFAHIGN. C227, H252, and E256 together coordinate Zn(2+). Positions 285-289 match the 'KMSKS' region motif; sequence KMSKS. Residue K288 participates in ATP binding.

It belongs to the class-I aminoacyl-tRNA synthetase family. Monomer. Requires Zn(2+) as cofactor.

It is found in the cytoplasm. The enzyme catalyses tRNA(Cys) + L-cysteine + ATP = L-cysteinyl-tRNA(Cys) + AMP + diphosphate. In Bradyrhizobium sp. (strain BTAi1 / ATCC BAA-1182), this protein is Cysteine--tRNA ligase.